Consider the following 684-residue polypeptide: Kinesin-like protein KIN-13B (684 aa).

2 disordered regions span residues 1-31 and 71-103; these read MSGR…SNGR and GNEF…SPGL. Polar residues-rich tracts occupy residues 18 to 31 and 79 to 91; these read LSDN…SNGR and TTPQ…TNQR. Residues 169-492 form the Kinesin motor domain; it reads KIKVVVRKRP…LRYADRVKSL (324 aa). 258–265 lines the ATP pocket; that stretch reads GQTGSGKT. The interval 574-594 is disordered; the sequence is KPTIQMKSRDMPRPDMKKSNS. The span at 580-594 shows a compositional bias: basic and acidic residues; sequence KSRDMPRPDMKKSNS. The stretch at 596–626 forms a coiled coil; sequence DNLNALLQEEEDLVNAHRKQVEDTMNIVKEE.

It belongs to the TRAFAC class myosin-kinesin ATPase superfamily. Kinesin family. KIN-13 subfamily.

Acts redundantly with KIN13A to modulate cell wall synthesis and cell expansion via the THE1 pathway. This chain is Kinesin-like protein KIN-13B, found in Arabidopsis thaliana (Mouse-ear cress).